Here is a 177-residue protein sequence, read N- to C-terminus: Ubiquinol-cytochrome c reductase iron-sulfur subunit (177 aa).

A helical membrane pass occupies residues methionine 18 to valine 38. The 88-residue stretch at alanine 88–arginine 175 folds into the Rieske domain. Residues cysteine 120, histidine 122, cysteine 139, and histidine 142 each coordinate [2Fe-2S] cluster. The cysteines at positions 125 and 141 are disulfide-linked.

Belongs to the Rieske iron-sulfur protein family. In terms of assembly, the main subunits of complex b-c1 are: cytochrome b, cytochrome c1 and the Rieske protein. The cofactor is [2Fe-2S] cluster.

The protein resides in the cell membrane. It catalyses the reaction a quinol + 2 Fe(III)-[cytochrome c](out) = a quinone + 2 Fe(II)-[cytochrome c](out) + 2 H(+)(out). Component of the ubiquinol-cytochrome c reductase complex (complex III or cytochrome b-c1 complex), which is a respiratory chain that generates an electrochemical potential coupled to ATP synthesis. This is Ubiquinol-cytochrome c reductase iron-sulfur subunit (petA) from Rickettsia conorii (strain ATCC VR-613 / Malish 7).